Consider the following 309-residue polypeptide: Probable manganese-dependent inorganic pyrophosphatase (309 aa).

6 residues coordinate Mn(2+): histidine 9, aspartate 13, aspartate 15, aspartate 75, histidine 97, and aspartate 149.

It belongs to the PPase class C family. The cofactor is Mn(2+).

It localises to the cytoplasm. It carries out the reaction diphosphate + H2O = 2 phosphate + H(+). The protein is Probable manganese-dependent inorganic pyrophosphatase of Bacillus mycoides (strain KBAB4) (Bacillus weihenstephanensis).